An 85-amino-acid polypeptide reads, in one-letter code: Thioredoxin (85 aa).

Positions 1–85 (MSKVKIELFT…ALVEAIKKRL (85 aa)) constitute a Glutaredoxin domain. Cysteines 14 and 17 form a disulfide.

It belongs to the glutaredoxin family.

The protein resides in the cytoplasm. In terms of biological role, acts to maintain redox homeostasis; functions as a protein disulfide reductase. The protein is Thioredoxin (trx) of Methanocaldococcus jannaschii (strain ATCC 43067 / DSM 2661 / JAL-1 / JCM 10045 / NBRC 100440) (Methanococcus jannaschii).